The sequence spans 367 residues: S-adenosylmethionine decarboxylase proenzyme 3 (367 aa).

Residues Glu-9 and Glu-12 contribute to the active site. Catalysis depends on Ser-69, which acts as the Schiff-base intermediate with substrate; via pyruvic acid. Pyruvic acid (Ser); by autocatalysis is present on Ser-69. Cys-83 functions as the Proton donor; for catalytic activity in the catalytic mechanism. Active-site proton acceptor; for processing activity residues include Ser-234 and His-247.

Belongs to the eukaryotic AdoMetDC family. Requires pyruvate as cofactor. Post-translationally, is synthesized initially as an inactive proenzyme. Formation of the active enzyme involves a self-maturation process in which the active site pyruvoyl group is generated from an internal serine residue via an autocatalytic post-translational modification. Two non-identical subunits are generated from the proenzyme in this reaction, and the pyruvate is formed at the N-terminus of the alpha chain, which is derived from the carboxyl end of the proenzyme. The post-translation cleavage follows an unusual pathway, termed non-hydrolytic serinolysis, in which the side chain hydroxyl group of the serine supplies its oxygen atom to form the C-terminus of the beta chain, while the remainder of the serine residue undergoes an oxidative deamination to produce ammonia and the pyruvoyl group blocking the N-terminus of the alpha chain.

It catalyses the reaction S-adenosyl-L-methionine + H(+) = S-adenosyl 3-(methylsulfanyl)propylamine + CO2. It participates in amine and polyamine biosynthesis; S-adenosylmethioninamine biosynthesis; S-adenosylmethioninamine from S-adenosyl-L-methionine: step 1/1. The chain is S-adenosylmethionine decarboxylase proenzyme 3 (SAMDC3) from Brassica juncea (Indian mustard).